Reading from the N-terminus, the 993-residue chain is Protein translocase subunit SecA (993 aa).

ATP is bound by residues Gln102, 120 to 124, and Asp523; that span reads GEGKT. Residues 910–962 are disordered; that stretch reads ENAPEPQISGGNGQQPPQRRQQTSLDDLEKQFERKKKRELEQARMAGGGMPDA. The segment covering 936-951 has biased composition (basic and acidic residues); the sequence is DLEKQFERKKKRELEQ. Zn(2+) is bound by residues Cys979, Cys981, Cys990, and His991.

This sequence belongs to the SecA family. In terms of assembly, monomer and homodimer. Part of the essential Sec protein translocation apparatus which comprises SecA, SecYEG and auxiliary proteins SecDF. Other proteins may also be involved. Zn(2+) serves as cofactor.

It localises to the cell inner membrane. Its subcellular location is the cytoplasm. The enzyme catalyses ATP + H2O + cellular proteinSide 1 = ADP + phosphate + cellular proteinSide 2.. Part of the Sec protein translocase complex. Interacts with the SecYEG preprotein conducting channel. Has a central role in coupling the hydrolysis of ATP to the transfer of proteins into and across the cell membrane, serving as an ATP-driven molecular motor driving the stepwise translocation of polypeptide chains across the membrane. In Koribacter versatilis (strain Ellin345), this protein is Protein translocase subunit SecA.